Here is a 500-residue protein sequence, read N- to C-terminus: Glutamate--tRNA ligase (500 aa).

Residues 12–22 (PSPTGHLHIGN) carry the 'HIGH' region motif. The 'KMSKS' region signature appears at 259-263 (KLSKR). Lys262 is a binding site for ATP.

It belongs to the class-I aminoacyl-tRNA synthetase family. Glutamate--tRNA ligase type 1 subfamily. Monomer.

The protein resides in the cytoplasm. The catalysed reaction is tRNA(Glu) + L-glutamate + ATP = L-glutamyl-tRNA(Glu) + AMP + diphosphate. Catalyzes the attachment of glutamate to tRNA(Glu) in a two-step reaction: glutamate is first activated by ATP to form Glu-AMP and then transferred to the acceptor end of tRNA(Glu). This chain is Glutamate--tRNA ligase, found in Lactobacillus delbrueckii subsp. bulgaricus (strain ATCC BAA-365 / Lb-18).